The primary structure comprises 107 residues: uncharacterized protein (107 aa).

A run of 3 helical transmembrane segments spans residues 16-36 (VIPC…SESL), 47-67 (IISL…HSLV), and 85-105 (LIVL…TSLI).

The protein localises to the membrane. This is an uncharacterized protein from Saccharomyces cerevisiae (strain ATCC 204508 / S288c) (Baker's yeast).